The primary structure comprises 435 residues: GTPase Obg (435 aa).

One can recognise an Obg domain in the interval 6–164 (ADFVDRVKIF…RWLELELKIL (159 aa)). In terms of domain architecture, OBG-type G spans 165 to 335 (ADVGLVGYPN…LVSKLASIVR (171 aa)). Residues 171 to 178 (GYPNVGKS), 196 to 200 (FTTLI), 217 to 220 (DIPG), 287 to 290 (NKID), and 316 to 318 (SAV) each bind GTP. Residues Ser-178 and Thr-198 each contribute to the Mg(2+) site. Residues 357–435 (RRLPEKFHLE…IGDFEFEYRE (79 aa)) form the OCT domain.

It belongs to the TRAFAC class OBG-HflX-like GTPase superfamily. OBG GTPase family. Monomer. Requires Mg(2+) as cofactor.

The protein resides in the cytoplasm. In terms of biological role, an essential GTPase which binds GTP, GDP and possibly (p)ppGpp with moderate affinity, with high nucleotide exchange rates and a fairly low GTP hydrolysis rate. Plays a role in control of the cell cycle, stress response, ribosome biogenesis and in those bacteria that undergo differentiation, in morphogenesis control. This chain is GTPase Obg, found in Thermotoga petrophila (strain ATCC BAA-488 / DSM 13995 / JCM 10881 / RKU-1).